We begin with the raw amino-acid sequence, 146 residues long: ATP synthase epsilon chain (146 aa).

This sequence belongs to the ATPase epsilon chain family. As to quaternary structure, F-type ATPases have 2 components, CF(1) - the catalytic core - and CF(0) - the membrane proton channel. CF(1) has five subunits: alpha(3), beta(3), gamma(1), delta(1), epsilon(1). CF(0) has three main subunits: a, b and c.

The protein resides in the cell inner membrane. In terms of biological role, produces ATP from ADP in the presence of a proton gradient across the membrane. The polypeptide is ATP synthase epsilon chain (Rhodospirillum centenum (strain ATCC 51521 / SW)).